The sequence spans 325 residues: Clavaminate synthase 2 (325 aa).

Fe cation contacts are provided by His-145, Glu-147, and His-280. Arg-294 lines the 2-oxoglutarate pocket.

The protein belongs to the clavaminate synthase family. It depends on Fe(2+) as a cofactor.

It catalyses the reaction deoxyamidinoproclavaminate + 2-oxoglutarate + O2 = amidinoproclavaminate + succinate + CO2. The enzyme catalyses proclavaminate + 2-oxoglutarate + O2 = dihydroclavaminate + succinate + CO2 + H2O. It carries out the reaction dihydroclavaminate + 2-oxoglutarate + O2 = clavaminate + succinate + CO2 + H2O. Its pathway is antibiotic biosynthesis; clavulanate biosynthesis; clavulanate from D-glyceraldehyde 3-phosphate and L-arginine: step 3/8. It functions in the pathway antibiotic biosynthesis; clavulanate biosynthesis; clavulanate from D-glyceraldehyde 3-phosphate and L-arginine: step 5/8. It participates in antibiotic biosynthesis; clavulanate biosynthesis; clavulanate from D-glyceraldehyde 3-phosphate and L-arginine: step 6/8. This is Clavaminate synthase 2 (cs2) from Streptomyces clavuligerus.